The sequence spans 231 residues: Fibrillarin-like rRNA/tRNA 2'-O-methyltransferase (231 aa).

S-adenosyl-L-methionine-binding positions include 88–89 (TT), 106–107 (EF), 131–132 (DA), and 151–154 (DVAQ).

Belongs to the methyltransferase superfamily. Fibrillarin family. In terms of assembly, interacts with nop5. Component of box C/D small ribonucleoprotein (sRNP) particles that contain rpl7ae, FlpA and nop5, plus a guide RNA.

Functionally, involved in pre-rRNA and tRNA processing. Utilizes the methyl donor S-adenosyl-L-methionine to catalyze the site-specific 2'-hydroxyl methylation of ribose moieties in rRNA and tRNA. Site specificity is provided by a guide RNA that base pairs with the substrate. Methylation occurs at a characteristic distance from the sequence involved in base pairing with the guide RNA. This Methanococcus aeolicus (strain ATCC BAA-1280 / DSM 17508 / OCM 812 / Nankai-3) protein is Fibrillarin-like rRNA/tRNA 2'-O-methyltransferase.